Reading from the N-terminus, the 310-residue chain is MNGLSVSELCCLFCCPPCPGRIAAKLAFLPPDPTYSLVPEPEPGPGGAGAAPSGPLRTSAATPGRWKIHLTERADFQYGQRELDTIEVFVTKSARANRIACMYVRCVPGARYTVLFSHGNAVDLGQMCSFYVGLGTRIGCNIFSYDYSGYGISSGRPSEKNLYADIDAAWQALRTRYGISPDSIILYGQSIGTVPTVDLASRYECAAVVLHSPLTSGMRVAFPDTKKTYCFDAFPNIEKVSKITSPVLIIHGTEDEVIDFSHGLALYERCPKAVEPLWVEGAGHNDIELYSQYLERLRRFISQELPSQRA.

Residues 38–61 (VPEPEPGPGGAGAAPSGPLRTSAA) form a disordered region. Active-site charge relay system residues include Ser-190, Asp-255, and His-284. Ser-307 is subject to Phosphoserine.

Belongs to the AB hydrolase superfamily. ABHD17 family. In terms of processing, palmitoylated on cysteine residues located in a cysteine cluster at the N-terminus which promotes membrane localization. Palmitoylation is required for post-synaptic localization and for depalmitoylating activity towards DLG4/PSD95.

The protein resides in the cell membrane. It localises to the endosome membrane. Its subcellular location is the cell projection. It is found in the dendritic spine. The protein localises to the postsynaptic density membrane. The catalysed reaction is S-hexadecanoyl-L-cysteinyl-[protein] + H2O = L-cysteinyl-[protein] + hexadecanoate + H(+). Hydrolyzes fatty acids from S-acylated cysteine residues in proteins. Has depalmitoylating activity towards NRAS. Has depalmitoylating activity towards DLG4/PSD95. May have depalmitoylating activity towars MAP6. The polypeptide is Alpha/beta hydrolase domain-containing protein 17A (Mus musculus (Mouse)).